The sequence spans 78 residues: Small ribosomal subunit protein bS18 (78 aa).

This sequence belongs to the bacterial ribosomal protein bS18 family. In terms of assembly, part of the 30S ribosomal subunit. Forms a tight heterodimer with protein bS6.

Functionally, binds as a heterodimer with protein bS6 to the central domain of the 16S rRNA, where it helps stabilize the platform of the 30S subunit. The chain is Small ribosomal subunit protein bS18 from Lactobacillus johnsonii (strain CNCM I-12250 / La1 / NCC 533).